The chain runs to 441 residues: Ribulose bisphosphate carboxylase large chain (441 aa).

The residue at position 4 (K4) is an N6,N6,N6-trimethyllysine. Substrate contacts are provided by N113 and T163. The Proton acceptor role is filled by K165. K167 contacts substrate. Residues K191, D193, and E194 each contribute to the Mg(2+) site. An N6-carboxylysine modification is found at K191. H284 (proton acceptor) is an active-site residue. Substrate-binding residues include R285, H317, and S369.

It belongs to the RuBisCO large chain family. Type I subfamily. As to quaternary structure, heterohexadecamer of 8 large chains and 8 small chains; disulfide-linked. The disulfide link is formed within the large subunit homodimers. Mg(2+) serves as cofactor. In terms of processing, the disulfide bond which can form in the large chain dimeric partners within the hexadecamer appears to be associated with oxidative stress and protein turnover.

Its subcellular location is the plastid. The protein localises to the chloroplast. It catalyses the reaction 2 (2R)-3-phosphoglycerate + 2 H(+) = D-ribulose 1,5-bisphosphate + CO2 + H2O. The enzyme catalyses D-ribulose 1,5-bisphosphate + O2 = 2-phosphoglycolate + (2R)-3-phosphoglycerate + 2 H(+). Functionally, ruBisCO catalyzes two reactions: the carboxylation of D-ribulose 1,5-bisphosphate, the primary event in carbon dioxide fixation, as well as the oxidative fragmentation of the pentose substrate in the photorespiration process. Both reactions occur simultaneously and in competition at the same active site. The sequence is that of Ribulose bisphosphate carboxylase large chain from Heliamphora nutans (Venezuelan marsh pitcher plant).